A 657-amino-acid chain; its full sequence is Outer dense fiber protein 2 (657 aa).

Residues Ser-73 and Ser-74 each carry the phosphoserine modification. Thr-92 carries the post-translational modification Phosphothreonine. Ser-95 bears the Phosphoserine; by TSSK4 mark. 2 positions are modified to phosphoserine: Ser-106 and Ser-109. Thr-110 is subject to Phosphothreonine. Phosphoserine occurs at positions 115 and 129. A Glycyl lysine isopeptide (Lys-Gly) (interchain with G-Cter in SUMO2) cross-link involves residue Lys-138. A Phosphoserine modification is found at Ser-139. 2 coiled-coil regions span residues 144-423 and 461-635; these read QKGE…AEQL and EIIV…SDLR. A Phosphothreonine modification is found at Thr-231. Phosphoserine occurs at positions 261 and 632.

The protein belongs to the ODF2 family. Self-associates. Associates with microtubules and forms a fibrillar structure partially linked to the microtubule network. Interacts via its C-terminus with PLK1. Interacts with ODF1. Interacts with MARK4; the interaction is required for localization of ODF2 to centrioles. Interacts with TSSK4. Interacts with AKNA. Interacts with CFAP58. Interacts with BBOF1. Interacts with CCDC38. Interacts with CCDC42. Post-translationally, tyrosine phosphorylated. Phosphorylated on Ser-95 by TSSK4.

The protein resides in the cytoplasm. It is found in the cytoskeleton. Its subcellular location is the microtubule organizing center. It localises to the centrosome. The protein localises to the cell projection. The protein resides in the cilium. It is found in the centriole. Its subcellular location is the spindle pole. It localises to the flagellum. In terms of biological role, seems to be a major component of sperm tail outer dense fibers (ODF). ODFs are filamentous structures located on the outside of the axoneme in the midpiece and principal piece of the mammalian sperm tail and may help to maintain the passive elastic structures and elastic recoil of the sperm tail. May have a modulating influence on sperm motility. Functions as a general scaffold protein that is specifically localized at the distal/subdistal appendages of mother centrioles. Component of the centrosome matrix required for the localization of PLK1 and NIN to the centrosomes. Required for the formation and/or maintenance of normal CETN1 assembly. This chain is Outer dense fiber protein 2 (ODF2), found in Bos taurus (Bovine).